The following is a 319-amino-acid chain: 4-diphosphocytidyl-2-C-methyl-D-erythritol kinase (319 aa).

Lysine 18 is an active-site residue. 103–113 contacts ATP; that stretch reads PIGAGLAGGST. Aspartate 145 is an active-site residue.

Belongs to the GHMP kinase family. IspE subfamily.

The catalysed reaction is 4-CDP-2-C-methyl-D-erythritol + ATP = 4-CDP-2-C-methyl-D-erythritol 2-phosphate + ADP + H(+). Its pathway is isoprenoid biosynthesis; isopentenyl diphosphate biosynthesis via DXP pathway; isopentenyl diphosphate from 1-deoxy-D-xylulose 5-phosphate: step 3/6. In terms of biological role, catalyzes the phosphorylation of the position 2 hydroxy group of 4-diphosphocytidyl-2C-methyl-D-erythritol. This is 4-diphosphocytidyl-2-C-methyl-D-erythritol kinase from Prochlorococcus marinus (strain NATL2A).